Here is a 550-residue protein sequence, read N- to C-terminus: Chaperonin GroEL (550 aa).

ATP contacts are provided by residues 30-33 (TLGP), Lys51, 87-91 (DGTTT), Gly415, and Asp497.

Belongs to the chaperonin (HSP60) family. As to quaternary structure, forms a cylinder of 14 subunits composed of two heptameric rings stacked back-to-back. Interacts with the co-chaperonin GroES.

It is found in the cytoplasm. The enzyme catalyses ATP + H2O + a folded polypeptide = ADP + phosphate + an unfolded polypeptide.. Functionally, together with its co-chaperonin GroES, plays an essential role in assisting protein folding. The GroEL-GroES system forms a nano-cage that allows encapsulation of the non-native substrate proteins and provides a physical environment optimized to promote and accelerate protein folding. The polypeptide is Chaperonin GroEL (Yersinia enterocolitica serotype O:8 / biotype 1B (strain NCTC 13174 / 8081)).